Here is a 191-residue protein sequence, read N- to C-terminus: NADH-quinone oxidoreductase subunit B 2 (191 aa).

[4Fe-4S] cluster is bound by residues C69, C70, C134, and C164.

The protein belongs to the complex I 20 kDa subunit family. In terms of assembly, NDH-1 is composed of 14 different subunits. Subunits NuoB, C, D, E, F, and G constitute the peripheral sector of the complex. The cofactor is [4Fe-4S] cluster.

The protein resides in the cell inner membrane. The enzyme catalyses a quinone + NADH + 5 H(+)(in) = a quinol + NAD(+) + 4 H(+)(out). Its function is as follows. NDH-1 shuttles electrons from NADH, via FMN and iron-sulfur (Fe-S) centers, to quinones in the respiratory chain. Couples the redox reaction to proton translocation (for every two electrons transferred, four hydrogen ions are translocated across the cytoplasmic membrane), and thus conserves the redox energy in a proton gradient. The protein is NADH-quinone oxidoreductase subunit B 2 of Gluconacetobacter diazotrophicus (strain ATCC 49037 / DSM 5601 / CCUG 37298 / CIP 103539 / LMG 7603 / PAl5).